We begin with the raw amino-acid sequence, 121 residues long: Large ribosomal subunit protein uL22 (121 aa).

The protein belongs to the universal ribosomal protein uL22 family. Part of the 50S ribosomal subunit.

In terms of biological role, this protein binds specifically to 23S rRNA; its binding is stimulated by other ribosomal proteins, e.g. L4, L17, and L20. It is important during the early stages of 50S assembly. It makes multiple contacts with different domains of the 23S rRNA in the assembled 50S subunit and ribosome. Its function is as follows. The globular domain of the protein is located near the polypeptide exit tunnel on the outside of the subunit, while an extended beta-hairpin is found that lines the wall of the exit tunnel in the center of the 70S ribosome. The sequence is that of Large ribosomal subunit protein uL22 from Hydrogenobaculum sp. (strain Y04AAS1).